We begin with the raw amino-acid sequence, 513 residues long: Serine/threonine-protein phosphatase T (513 aa).

3 TPR repeats span residues 12–45, 46–79, and 80–113; these read ALER…DSTQ, SIYF…DPKN, and IKAY…KPND. Residues 188-513 are catalytic; the sequence is KNMSQEFISK…MAYSNGGFGL (326 aa). D249, H251, D278, and N310 together coordinate Mn(2+). The active-site Proton donor/acceptor is H311. Mn(2+) is bound by residues H359 and H434.

It belongs to the PPP phosphatase family. PP-5 (PP-T) subfamily. In terms of assembly, interacts (via TPR repeats) with HSP82 (via C-terminal MEEVD pentapeptide). Mg(2+) serves as cofactor. Requires Mn(2+) as cofactor.

It is found in the nucleus. The catalysed reaction is O-phospho-L-seryl-[protein] + H2O = L-seryl-[protein] + phosphate. It catalyses the reaction O-phospho-L-threonyl-[protein] + H2O = L-threonyl-[protein] + phosphate. Its activity is regulated as follows. Stimulated by arachidonic acid and other unsaturated fatty acids, and by arachidoyl coenzyme A. Functionally, protein phosphatase that specifically binds to and dephosphorylates the molecular chaperone Hsp90 (HSC82 and HSP82). Dephosphorylation positively regulates the Hsp90 chaperone machinery. This Saccharomyces cerevisiae (strain ATCC 204508 / S288c) (Baker's yeast) protein is Serine/threonine-protein phosphatase T (PPT1).